A 376-amino-acid polypeptide reads, in one-letter code: MSSVSGVRTPRERRSALRSLLRKRRQRELASKVASTVNGATSANNHGEPPSPADARPRLTLHDLHDIFREHPELELKYLNMMKMAITGKESICLPFNFHSHRQHTCLDISPYGNEQVSRIACTSCEDNRILPTASDAMVAFINQTSNIMKNRNFYYGFCKSSELLKLSTNQPPIFQIYYLLHAANHDIVPFMHAEDGRLHMHVIFENPDVHIPCDCITQMLTAAREDYSVTLNIVRDHVVISVLCHAVSASSVKIDVTILQRKIDEMDIPNDVSESFERYKELIQELCQSSGNNLYEEATSSYAIRSPLTASPLHVVSTNGCGPSSSSQSTPPHLHPPSQATQPHHYSHHQSQSQQHHHRPQSPPPPLFLNSIRAP.

S19 is modified (phosphoserine). The segment at 22–57 (RKRRQRELASKVASTVNGATSANNHGEPPSPADARP) is disordered. Residues 33–45 (VASTVNGATSANN) are compositionally biased toward polar residues. A CCCH-type zinc finger spans residues 106-211 (CLDISPYGNE…HVIFENPDVH (106 aa)). The tract at residues 316-376 (VVSTNGCGPS…PLFLNSIRAP (61 aa)) is disordered. The span at 317–332 (VSTNGCGPSSSSQSTP) shows a compositional bias: polar residues.

It belongs to the herpesviridae NEC1 protein family. In terms of assembly, forms a heterohexameric complex with NEC2. Interacts with capsid vertex specific component 2/CVC2; this interaction directs the capsid to the host inner nuclear membrane to initiate budding. Post-translationally, phosphorylated at serine residues in the N-terminus. This phosphorylation regulates the localization within the inner nuclear membrane. Phosphorylation by viral kinase UL97 at Ser-19 plays an important role for correct viral nuclear egress complex (NEC) localization.

It localises to the host nucleus inner membrane. Its function is as follows. Plays an essential role in virion nuclear egress, the first step of virion release from infected cell. Within the host nucleus, NEC1 interacts with the newly formed capsid through the vertexes and directs it to the inner nuclear membrane by associating with NEC2. Induces the budding of the capsid at the inner nuclear membrane as well as its envelopment into the perinuclear space. There, the NEC1/NEC2 complex promotes the fusion of the enveloped capsid with the outer nuclear membrane and the subsequent release of the viral capsid into the cytoplasm where it will reach the secondary budding sites in the host Golgi or trans-Golgi network. The chain is Nuclear egress protein 1 from Homo sapiens (Human).